We begin with the raw amino-acid sequence, 299 residues long: Probable lipid kinase YegS (299 aa).

Residues 2 to 133 form the DAGKc domain; sequence AEFPASLLIL…IDMAQVNKQT (132 aa). ATP contacts are provided by residues Thr-40, 66 to 72, and Thr-95; that span reads GDGTINE. Residues Leu-215, Asp-218, and Leu-220 each coordinate Mg(2+). Glu-271 functions as the Proton acceptor in the catalytic mechanism.

It belongs to the diacylglycerol/lipid kinase family. YegS lipid kinase subfamily. Mg(2+) serves as cofactor. It depends on Ca(2+) as a cofactor.

It is found in the cytoplasm. Functionally, probably phosphorylates lipids; the in vivo substrate is unknown. The chain is Probable lipid kinase YegS from Escherichia coli (strain K12 / MC4100 / BW2952).